The sequence spans 303 residues: Lipoyl synthase (303 aa).

Positions 34, 39, 45, 60, 64, 67, and 273 each coordinate [4Fe-4S] cluster. Residues 46–262 (WSKKHATVMI…ERVARTKGFL (217 aa)) enclose the Radical SAM core domain.

This sequence belongs to the radical SAM superfamily. Lipoyl synthase family. Requires [4Fe-4S] cluster as cofactor.

Its subcellular location is the cytoplasm. The enzyme catalyses [[Fe-S] cluster scaffold protein carrying a second [4Fe-4S](2+) cluster] + N(6)-octanoyl-L-lysyl-[protein] + 2 oxidized [2Fe-2S]-[ferredoxin] + 2 S-adenosyl-L-methionine + 4 H(+) = [[Fe-S] cluster scaffold protein] + N(6)-[(R)-dihydrolipoyl]-L-lysyl-[protein] + 4 Fe(3+) + 2 hydrogen sulfide + 2 5'-deoxyadenosine + 2 L-methionine + 2 reduced [2Fe-2S]-[ferredoxin]. It participates in protein modification; protein lipoylation via endogenous pathway; protein N(6)-(lipoyl)lysine from octanoyl-[acyl-carrier-protein]: step 2/2. In terms of biological role, catalyzes the radical-mediated insertion of two sulfur atoms into the C-6 and C-8 positions of the octanoyl moiety bound to the lipoyl domains of lipoate-dependent enzymes, thereby converting the octanoylated domains into lipoylated derivatives. The chain is Lipoyl synthase from Rickettsia bellii (strain OSU 85-389).